A 192-amino-acid chain; its full sequence is Thiol-disulfide oxidoreductase ResA (192 aa).

The chain crosses the membrane as a helical; Signal-anchor for type II membrane protein span at residues 22–41 (SSILLILVAAVVFAIVSNMK). The 143-residue stretch at 47-189 (YRVGDAAPDF…LEGYLNDIAP (143 aa)) folds into the Thioredoxin domain. A disulfide bridge links C89 with C92.

Belongs to the thioredoxin family. ResA subfamily.

It localises to the cell membrane. It participates in protein modification; cytochrome c assembly. Its function is as follows. Thiol-disulfide oxidoreductase which is required in disulfide reduction during c-type cytochrome synthesis. May accept reducing equivalents from CcdA, leading to breakage of disulfide bonds in apocytochrome c; following this reduction heme can be covalently attached. The protein is Thiol-disulfide oxidoreductase ResA of Oceanobacillus iheyensis (strain DSM 14371 / CIP 107618 / JCM 11309 / KCTC 3954 / HTE831).